A 55-amino-acid chain; its full sequence is MKFIIVLILISVLIATIVPVNEAQTQCQSVRDCQQYCLTPDRCSYGTCYCKTTGK.

The first 23 residues, 1–23, serve as a signal peptide directing secretion; the sequence is MKFIIVLILISVLIATIVPVNEA. Gln24 is modified (pyrrolidone carboxylic acid). 3 disulfide bridges follow: Cys27/Cys43, Cys33/Cys48, and Cys37/Cys50. Thr53 carries the post-translational modification Threonine amide.

Belongs to the short scorpion toxin superfamily. Potassium channel inhibitor family. Alpha-KTx 17 subfamily. Expressed by the venom gland.

It localises to the secreted. Blocker of potassium channels, which inhibits both the delayed rectifier and fast transient potassium current. The inhibition is reversible and voltage-independent. It causes a depolarizing shift of the steady-state activation curve of the currents, without changing their steady-state inactivation behavior. This Olivierus martensii (Manchurian scorpion) protein is Potassium channel toxin alpha-KTx 17.1.